The chain runs to 287 residues: tRNA N(3)-cytidine methyltransferase METTL6 (287 aa).

W45, Y49, G87, D110, D136, L137, and I157 together coordinate S-adenosyl-L-methionine. A disordered region spans residues 267-287 (RKPPKDPAPTTDSASLLRKEF).

Belongs to the methyltransferase superfamily. METL family. In terms of assembly, monomer. Interacts with SARS1/SerRS; interaction is mediated via tRNA(Ser) and is required for N(3)-methylcytidine methylation.

The protein localises to the cytoplasm. It localises to the nucleus. It carries out the reaction cytidine(32) in tRNA(Ser) + S-adenosyl-L-methionine = N(3)-methylcytidine(32) in tRNA(Ser) + S-adenosyl-L-homocysteine + H(+). In terms of biological role, S-adenosyl-L-methionine-dependent methyltransferase that mediates N(3)-methylcytidine modification of residue 32 of the tRNA anticodon loop of tRNA(Ser), including tRNA(Ser)(UGA) and tRNA(Ser)(GCU). Interaction with SARS1/SerRS is required for N(3)-methylcytidine methylation. This chain is tRNA N(3)-cytidine methyltransferase METTL6 (Mettl6), found in Rattus norvegicus (Rat).